Here is a 188-residue protein sequence, read N- to C-terminus: Ribosome maturation factor RimP (188 aa).

Belongs to the RimP family.

Its subcellular location is the cytoplasm. Required for maturation of 30S ribosomal subunits. This Corynebacterium aurimucosum (strain ATCC 700975 / DSM 44827 / CIP 107346 / CN-1) (Corynebacterium nigricans) protein is Ribosome maturation factor RimP.